Reading from the N-terminus, the 876-residue chain is MAP7 domain-containing protein 3 (876 aa).

Disordered regions lie at residues 30-139, 162-200, and 402-438; these read AEER…KFKA, GGVMNADKSGKLENKRSSSLSRKDNRLHPRGDMQHVDNT, and TEAPLQARGESRLEASVEGQPEANVEGSPKNPEIDKR. Residues 39 to 54 are compositionally biased toward polar residues; that stretch reads INSSAGANKRSSSTPD. The stretch at 58–136 forms a coiled coil; sequence LKNDVKQQLA…KQKQAEDTEK (79 aa). 2 stretches are compositionally biased toward basic and acidic residues: residues 60 to 139 and 169 to 196; these read NDVK…KFKA and KSGKLENKRSSSLSRKDNRLHPRGDMQH. A phosphoserine mark is found at Ser417 and Ser483. Coiled-coil stretches lie at residues 549 to 578 and 626 to 658; these read IQIRHAAYEQSKNEKERLQKEETKQRIARK and SAMMKSRDSAEQRKKEQENILQHWQERLERRKA. Disordered stretches follow at residues 558–683 and 742–783; these read QSKN…EIFP and IQGK…NPNH. Composition is skewed to basic and acidic residues over residues 559–590 and 630–659; these read SKNEKERLQKEETKQRIARKPEIMAEKLDKVP and KSRDSAEQRKKEQENILQHWQERLERRKAS. A compositionally biased stretch (acidic residues) spans 665–679; that stretch reads SEDEADDEGESEDSL. A compositionally biased stretch (basic residues) spans 750–763; that stretch reads SAKKPPTRPIRSRK. The segment covering 771–782 has biased composition (polar residues); that stretch reads IRPTQSASSNPN.

This sequence belongs to the MAP7 family. High expression in lung, skeletal muscle, brain, and kidney, with much weaker expression in spleen, small intestine, liver, and heart.

It is found in the cytoplasm. The protein resides in the cytoskeleton. The protein localises to the spindle. Promotes the assembly and stability of microtubules. This is MAP7 domain-containing protein 3 (Map7d3) from Mus musculus (Mouse).